Here is a 181-residue protein sequence, read N- to C-terminus: MYFKMITSAPWVLYPEIGEDPSKKWIFREPKISDGDGIYSLIADCPPLDMNSSYCNFLQSTHFSKTSILVEHKGDIAGFISGYQKPDEQDVLFIWQVAVSPRFRGNGLAFRMLKELLEREALSEVKSVETTITEDNQASWALFKKLDAMNGNHGQVSTFLDEKAHFKGKHDTEFLYRIPLK.

Residues 25–181 (WIFREPKISD…TEFLYRIPLK (157 aa)) enclose the N-acetyltransferase domain.

It belongs to the acetyltransferase family. EctA subfamily.

It carries out the reaction L-2,4-diaminobutanoate + acetyl-CoA = (2S)-4-acetamido-2-aminobutanoate + CoA + H(+). It functions in the pathway amine and polyamine biosynthesis; ectoine biosynthesis; L-ectoine from L-aspartate 4-semialdehyde: step 2/3. Catalyzes the acetylation of L-2,4-diaminobutyrate (DABA) to gamma-N-acetyl-alpha,gamma-diaminobutyric acid (ADABA) with acetyl coenzyme A. In Vibrio parahaemolyticus serotype O3:K6 (strain RIMD 2210633), this protein is L-2,4-diaminobutyric acid acetyltransferase (ectA).